Here is a 125-residue protein sequence, read N- to C-terminus: Scinderin (125 aa).

Tyrosine 13 is modified (phosphotyrosine). Residues 23–30 (KGGLKYKA) and 49–57 (RLLHVKGRR) contribute to the a 1,2-diacyl-sn-glycero-3-phospho-(1D-myo-inositol-4,5-bisphosphate) site. The stretch at 59–99 (VRATEVPLSWDSFNKGDCFIIDLGSEIYQWFGSSCNKYERL) is one Gelsolin-like 1 repeat.

This sequence belongs to the villin/gelsolin family.

It is found in the cytoplasm. It localises to the cytoskeleton. Its subcellular location is the cell projection. The protein localises to the podosome. Ca(2+)-dependent actin filament-severing protein that has a regulatory function in exocytosis by affecting the organization of the microfilament network underneath the plasma membrane. In vitro, also has barbed end capping and nucleating activities in the presence of Ca(2+). Severing activity is inhibited by phosphatidylinositol 4,5-bis-phosphate (PIP2). Required for megakaryocyte differentiation, maturation, polyploidization and apoptosis with the release of platelet-like particles. Plays a role in osteoclastogenesis (OCG) and actin cytoskeletal organization in osteoclasts. Regulates chondrocyte proliferation and differentiation. Inhibits cell proliferation and tumorigenesis. Signaling is mediated by MAPK, p38 and JNK pathways. The polypeptide is Scinderin (SCIN) (Sus scrofa (Pig)).